Here is a 279-residue protein sequence, read N- to C-terminus: NADPH-dependent 7-cyano-7-deazaguanine reductase (279 aa).

86 to 88 (IES) contributes to the substrate binding site. 88–89 (SK) contributes to the NADPH binding site. Cys187 acts as the Thioimide intermediate in catalysis. Asp194 acts as the Proton donor in catalysis. Position 226 to 227 (226 to 227 (HE)) interacts with substrate. 255 to 256 (RG) contacts NADPH.

Belongs to the GTP cyclohydrolase I family. QueF type 2 subfamily. Homodimer.

Its subcellular location is the cytoplasm. The catalysed reaction is 7-aminomethyl-7-carbaguanine + 2 NADP(+) = 7-cyano-7-deazaguanine + 2 NADPH + 3 H(+). It functions in the pathway tRNA modification; tRNA-queuosine biosynthesis. In terms of biological role, catalyzes the NADPH-dependent reduction of 7-cyano-7-deazaguanine (preQ0) to 7-aminomethyl-7-deazaguanine (preQ1). This chain is NADPH-dependent 7-cyano-7-deazaguanine reductase, found in Haemophilus ducreyi (strain 35000HP / ATCC 700724).